The sequence spans 161 residues: Ribosome maturation factor RimP (161 aa).

It belongs to the RimP family.

It localises to the cytoplasm. Functionally, required for maturation of 30S ribosomal subunits. This chain is Ribosome maturation factor RimP, found in Rickettsia rickettsii (strain Iowa).